The following is a 702-amino-acid chain: MERPQKMPKVAKVKNKAPAEVQITAEQLLREAKERDLEILPPPPKQKISDPAELADYQQRKRKTFEDNLRKNRMVVSHWIKYAQWEEQQQEIQRARSIWERALDNEHRNVTLWLKYAEMEMKNKQVNHARNLWDRAVTIMPRVNQFWYKYTYMEEMLENVAGARQVFERWMEWQPEEQAWQTYVNFELRYKEIDRAREIYERFVYVHPDVKNWIKFARFEESHGFIHGSRRVFERAVEFFGDDYIEERLFIAFARFEEGQKEHDRARIIYKYALDHLPKDRTQELFKAYTKHEKKYGDRAGIEDVIVSKRKYQYEQEVAANPTNYDAWFDYLRLIEAEGDRDQIRETYERAISNVPPANEKNFWRRYIYLWINYALYEELEAEDAERTRQIYKTCLELIPHKQFTFSKLWLLYAQFEIRCKELQRARKALGLAIGMCPRDKLFRGYIDLEIQLREFERCRMLYEKFLEFGPENCVTWMKFAELENLLGDTDRARAIFELAVQQPRLDMPELLWKAYIDFEVALGETELARQLYERLLERTQHVKVWMSFAKFEMGLSHGDSGPDAELNVQLARRIYERANEMLRQLGDKESRVLLLEAWRDFERDASDSQEMQKVMDKMPRRIKKRQKIVSDNGVEEGWEEVFDYIFPEDEMARPNLKLLAAAKMWKTQKDNTVDDPPATAIASEPEPAADAAPADTTDSGD.

13 HAT repeats span residues D56–Q88, Q90–K122, K124–M156, E158–R189, K191–S222, G224–G259, K261–K295, V305–A337, G339–N373, E383–R419, R454–L486, G488–A522, and G524–G555. The Nuclear localization signal motif lies at P620 to K628. The segment at K670–D702 is disordered. Over residues A683–D702 the composition is skewed to low complexity.

It belongs to the crooked-neck family. Colocalizes with a complex containing snRNP proteins. As to expression, transcribed in all cells during embryonic development.

It is found in the nucleus speckle. May be involved in pre-mRNA splicing process. Involved in embryonic neurogenesis and cell rearrangement during Malpighian tubule morphogenesis. This Drosophila melanogaster (Fruit fly) protein is Protein crooked neck (crn).